Reading from the N-terminus, the 443-residue chain is F-box only protein 39 (443 aa).

Residues 13–59 form the F-box domain; it reads QSCWATLPDVCLRRVFWWLGDRDRSRAALVCRKWNQIMYSADLWRYR.

In terms of assembly, directly interacts with SKP1 and CUL1.

Functionally, substrate-recognition component of the SCF (SKP1-CUL1-F-box protein)-type E3 ubiquitin ligase complex. This chain is F-box only protein 39 (Fbxo39), found in Rattus norvegicus (Rat).